The chain runs to 451 residues: Phosphoglucosamine mutase (451 aa).

The Phosphoserine intermediate role is filled by Ser101. Mg(2+) is bound by residues Ser101, Asp240, Asp242, and Asp244. At Ser101 the chain carries Phosphoserine.

It belongs to the phosphohexose mutase family. The cofactor is Mg(2+). In terms of processing, activated by phosphorylation.

It carries out the reaction alpha-D-glucosamine 1-phosphate = D-glucosamine 6-phosphate. In terms of biological role, catalyzes the conversion of glucosamine-6-phosphate to glucosamine-1-phosphate. This chain is Phosphoglucosamine mutase, found in Thioalkalivibrio sulfidiphilus (strain HL-EbGR7).